The following is a 121-amino-acid chain: Large ribosomal subunit protein uL22 (121 aa).

The protein belongs to the universal ribosomal protein uL22 family. As to quaternary structure, part of the 50S ribosomal subunit.

Its function is as follows. This protein binds specifically to 23S rRNA; its binding is stimulated by other ribosomal proteins, e.g. L4, L17, and L20. It is important during the early stages of 50S assembly. It makes multiple contacts with different domains of the 23S rRNA in the assembled 50S subunit and ribosome. In terms of biological role, the globular domain of the protein is located near the polypeptide exit tunnel on the outside of the subunit, while an extended beta-hairpin is found that lines the wall of the exit tunnel in the center of the 70S ribosome. This is Large ribosomal subunit protein uL22 from Parasynechococcus marenigrum (strain WH8102).